The sequence spans 297 residues: MRDRTHELRQGDDSSDEEDKERVALVVHPGTARLGSPDEEFFHKVRTIRQTIVKLGNKVQELEKQQVTILATPLPEESMKQELQNLRDEIKQLGREIRLQLKAIEPQKEEADENYNSVNTRMRKTQHGVLSQQFVELINKCNSMQSEYREKNVERIRRQLKITNAGMVSDEELEQMLDSGQSEVFVSNILKDTQVTRQALNEISARHSEIQQLERSIRELHDIFTFLATEVEMQGEMINRIEKNILSSADYVERGQEHVKTALENQKKARKKKVLIAICVSITVVLLAVIIGVTVVG.

Residues 1-12 are compositionally biased toward basic and acidic residues; the sequence is MRDRTHELRQGD. The disordered stretch occupies residues 1–21; the sequence is MRDRTHELRQGDDSSDEEDKE. Residues 1–275 lie on the Cytoplasmic side of the membrane; that stretch reads MRDRTHELRQ…QKKARKKKVL (275 aa). S14 and S15 each carry phosphoserine. The residue at position 31 (T31) is a Phosphothreonine. Phosphoserine occurs at positions 36, 117, 208, and 248. Residues 43 to 163 adopt a coiled-coil conformation; the sequence is HKVRTIRQTI…ERIRRQLKIT (121 aa). The interaction with CENPF stretch occupies residues 154–297; the sequence is ERIRRQLKIT…AVIIGVTVVG (144 aa). A t-SNARE coiled-coil homology domain is found at 200–262; the sequence is LNEISARHSE…ERGQEHVKTA (63 aa). Residues 276–296 form a helical; Anchor for type IV membrane protein membrane-spanning segment; sequence IAICVSITVVLLAVIIGVTVV. Residue G297 is a topological domain, extracellular.

The protein belongs to the syntaxin family. Component of the SNARE complex composed of STX4, SNAP23 and VAMP7 that interacts with SYT7 during lysosomal exocytosis. Found in a complex with VAMP8 and SNAP23. Detected in a complex with SNAP23 and STXBP4. Interacts with VAMP2. Interacts with SNAP23 and SNAPIN. Interacts with LLGL1. Interacts (via C-terminus) with CENPF. Interacts with DOC2B. Interacts with STXBP6. Interacts with STXBP3; excludes interaction with DOC2B and SNAP25. Interacts with STXBP4; excludes interaction with VAMP2. Interacts with STXBP5L. As to expression, expressed in neutrophils and neutrophil-differentiated HL-60 cells. Expression in neutrophils increases with differentiation.

Its subcellular location is the cell membrane. The protein resides in the cell projection. It localises to the neuron projection. The protein localises to the stereocilium. Functionally, plasma membrane t-SNARE that mediates docking of transport vesicles. Necessary for the translocation of SLC2A4 from intracellular vesicles to the plasma membrane. In neurons, recruited at neurite tips to membrane domains rich in the phospholipid 1-oleoyl-2-palmitoyl-PC (OPPC) which promotes neurite tip surface expression of the dopamine transporter SLC6A3/DAT by facilitating fusion of SLC6A3-containing transport vesicles with the plasma membrane. Together with STXB3 and VAMP2, may also play a role in docking/fusion of intracellular GLUT4-containing vesicles with the cell surface in adipocytes and in docking of synaptic vesicles at presynaptic active zones. Required for normal hearing. This Homo sapiens (Human) protein is Syntaxin-4 (STX4).